We begin with the raw amino-acid sequence, 211 residues long: Probable GTP-binding protein EngB (211 aa).

Residues 26-200 enclose the EngB-type G domain; sequence SGIEIAFAGR…RQKLDDWFAA (175 aa). Residues 34–41, 61–65, 79–82, 146–149, and 179–181 contribute to the GTP site; these read GRSNAGKS, GRTRL, DLPG, TKAD, and FSS. 2 residues coordinate Mg(2+): Ser41 and Thr63.

This sequence belongs to the TRAFAC class TrmE-Era-EngA-EngB-Septin-like GTPase superfamily. EngB GTPase family. It depends on Mg(2+) as a cofactor.

Its function is as follows. Necessary for normal cell division and for the maintenance of normal septation. This chain is Probable GTP-binding protein EngB, found in Sodalis glossinidius (strain morsitans).